A 355-amino-acid chain; its full sequence is Peptide chain release factor 1 (355 aa).

Glutamine 231 is subject to N5-methylglutamine. The span at 280-291 (SERLAKESEARK) shows a compositional bias: basic and acidic residues. The disordered stretch occupies residues 280 to 303 (SERLAKESEARKSQVGSGDRSERI).

It belongs to the prokaryotic/mitochondrial release factor family. Methylated by PrmC. Methylation increases the termination efficiency of RF1.

It is found in the cytoplasm. Its function is as follows. Peptide chain release factor 1 directs the termination of translation in response to the peptide chain termination codons UAG and UAA. This is Peptide chain release factor 1 from Campylobacter jejuni (strain RM1221).